The following is a 672-amino-acid chain: DNA ligase (672 aa).

Residues 32–36 (DAEYD), 81–82 (SL), and glutamate 113 contribute to the NAD(+) site. Residue lysine 115 is the N6-AMP-lysine intermediate of the active site. NAD(+) contacts are provided by arginine 136, glutamate 173, lysine 290, and lysine 314. Zn(2+) contacts are provided by cysteine 408, cysteine 411, cysteine 426, and cysteine 432. Residues 594 to 672 (EIDSPFAGKT…EAEMLRLLGE (79 aa)) form the BRCT domain.

This sequence belongs to the NAD-dependent DNA ligase family. LigA subfamily. Mg(2+) serves as cofactor. It depends on Mn(2+) as a cofactor.

The catalysed reaction is NAD(+) + (deoxyribonucleotide)n-3'-hydroxyl + 5'-phospho-(deoxyribonucleotide)m = (deoxyribonucleotide)n+m + AMP + beta-nicotinamide D-nucleotide.. Its function is as follows. DNA ligase that catalyzes the formation of phosphodiester linkages between 5'-phosphoryl and 3'-hydroxyl groups in double-stranded DNA using NAD as a coenzyme and as the energy source for the reaction. It is essential for DNA replication and repair of damaged DNA. This chain is DNA ligase, found in Cronobacter sakazakii (strain ATCC BAA-894) (Enterobacter sakazakii).